The following is a 158-amino-acid chain: Large ribosomal subunit protein uL11 (158 aa).

The protein belongs to the universal ribosomal protein uL11 family. Part of the ribosomal stalk of the 50S ribosomal subunit. Interacts with L10 and the large rRNA to form the base of the stalk. L10 forms an elongated spine to which L12 dimers bind in a sequential fashion forming a multimeric L10(L12)X complex.

Functionally, forms part of the ribosomal stalk which helps the ribosome interact with GTP-bound translation factors. This chain is Large ribosomal subunit protein uL11, found in Methanocella arvoryzae (strain DSM 22066 / NBRC 105507 / MRE50).